Here is a 1861-residue protein sequence, read N- to C-terminus: Polyketide synthase 2 (1861 aa).

Positions 109-525 constitute a Ketosynthase family 3 (KS3) domain; that stretch reads DSKIAIIGMS…GGNSALLLED (417 aa). Residues C264, H399, and H441 each act as for beta-ketoacyl synthase activity in the active site. The interval 626-931 is malonyl-CoA:ACP transacylase (MAT) domain; sequence GFVFSGQGAQ…PSLHRKDDGW (306 aa). The For acyl/malonyl transferase activity role is filled by S716. The segment at 1008 to 1312 is product template (PT) domain; that stretch reads TSSVQKVIQQ…VFGGMTVLPP (305 aa). The N-terminal hotdog fold stretch occupies residues 1012–1146; sequence QKVIQQTDGP…CILRFADPKS (135 aa). In terms of domain architecture, PKS/mFAS DH spans 1012 to 1318; the sequence is QKVIQQTDGP…VLPPRRGADA (307 aa). Residue H1045 is the Proton acceptor; for dehydratase activity of the active site. The interval 1174 to 1318 is C-terminal hotdog fold; it reads DSLLSKGIVY…VLPPRRGADA (145 aa). D1232 functions as the Proton donor; for dehydratase activity in the catalytic mechanism. One can recognise a Carrier 1 domain in the interval 1356 to 1433; it reads SPQSGAIHRI…ELRLFLAADQ (78 aa). S1393 carries the post-translational modification O-(pantetheine 4'-phosphoryl)serine. The tract at residues 1441 to 1470 is disordered; that stretch reads CESSNGQHTPQTSDKGSGTLTAQKPDHDTD. A compositionally biased stretch (polar residues) spans 1442–1462; it reads ESSNGQHTPQTSDKGSGTLTA. The Carrier 2 domain maps to 1472-1546; that stretch reads EMTLNRVCAI…SLQKTLRGTE (75 aa). S1506 bears the O-(pantetheine 4'-phosphoryl)serine mark. The tract at residues 1582 to 1855 is thioesterase (TE) domain; it reads ASAPHATSIL…IIEMSNLIGD (274 aa). S1685 (for thioesterase activity) is an active-site residue.

Polyketide synthase; part of the Pks2 gene cluster that mediates the formation of infectious structures (appressoria), enabling these fungi to kill insects faster. The product of the Pks2 gene cluster is different from the one of Pks1 and has still not been identified. This Metarhizium acridum (strain CQMa 102) protein is Polyketide synthase 2.